The sequence spans 325 residues: Phenylalanine--tRNA ligase alpha subunit (325 aa).

E251 provides a ligand contact to Mg(2+).

The protein belongs to the class-II aminoacyl-tRNA synthetase family. Phe-tRNA synthetase alpha subunit type 1 subfamily. As to quaternary structure, tetramer of two alpha and two beta subunits. The cofactor is Mg(2+).

The protein localises to the cytoplasm. It carries out the reaction tRNA(Phe) + L-phenylalanine + ATP = L-phenylalanyl-tRNA(Phe) + AMP + diphosphate + H(+). In Thermotoga maritima (strain ATCC 43589 / DSM 3109 / JCM 10099 / NBRC 100826 / MSB8), this protein is Phenylalanine--tRNA ligase alpha subunit (pheS).